Reading from the N-terminus, the 268-residue chain is Undecaprenyl-diphosphatase (268 aa).

Helical transmembrane passes span 5–25, 43–63, 84–104, 106–126, 184–204, 213–233, and 248–268; these read SIIS…IPVS, GNTF…LVYF, FSVL…HGFI, AVLF…GVIL, AAEF…TLDL, FDDI…GIVV, and PFAI…WLVG.

This sequence belongs to the UppP family.

The protein resides in the cell inner membrane. It carries out the reaction di-trans,octa-cis-undecaprenyl diphosphate + H2O = di-trans,octa-cis-undecaprenyl phosphate + phosphate + H(+). Functionally, catalyzes the dephosphorylation of undecaprenyl diphosphate (UPP). Confers resistance to bacitracin. The protein is Undecaprenyl-diphosphatase of Sinorhizobium fredii (strain NBRC 101917 / NGR234).